Reading from the N-terminus, the 404-residue chain is WD repeat and SOCS box-containing protein 2 (404 aa).

WD repeat units follow at residues 16-55 (GRPHQFDWKSSCETWSVAFSPDGSWFAWSQGHCIVKLIPW), 81-140 (GSPK…IWEV), 144-183 (LLLLNLSGHQDVVRDLSFTPSGSLILVSASRDKTLRIWDL), 188-226 (KQIQVLSGHLQWVYCCSISPDCSMLCSAAGEKSVFLWSM), 230-268 (TLIRKLEGHQSSVVSCDFSPDSALLVTASYDTNVIMWDP), 283-322 (DPAMDDSDVHISSLRSVCFSPEGLYLATVADDRLLRIWAL), and 325-362 (KTPIAFAPMTNGLCCTFFPHGGVIATGTRDGHVQFWTA). Residues 68-87 (AKSRSSKNETKGRGSPKEKT) are disordered. In terms of domain architecture, SOCS box spans 356–404 (HVQFWTAPRVLSSLKHLCRKALRSFLTTYQVLALPIPKKMKEFLTYRTF).

The protein operates within protein modification; protein ubiquitination. In terms of biological role, may be a substrate-recognition component of a SCF-like ECS (Elongin-Cullin-SOCS-box protein) E3 ubiquitin ligase complex which mediates the ubiquitination and subsequent proteasomal degradation of target proteins. The protein is WD repeat and SOCS box-containing protein 2 (WSB2) of Homo sapiens (Human).